The primary structure comprises 200 residues: Recombination protein RecR (200 aa).

The C4-type zinc-finger motif lies at 60–75 (CVYCQALTEDDVCNIC). A Toprim domain is found at 83–177 (TKLCIIESML…KISRIGFGVP (95 aa)).

The protein belongs to the RecR family.

Its function is as follows. May play a role in DNA repair. It seems to be involved in an RecBC-independent recombinational process of DNA repair. It may act with RecF and RecO. This is Recombination protein RecR from Francisella tularensis subsp. mediasiatica (strain FSC147).